Here is a 147-residue protein sequence, read N- to C-terminus: MSEILTKSRARNVFYGGSLFFIAVFVGLTVQSHNYVVSTTPALTDEVILGKHVWERNSCINCHTLHGEGAYFAPEVGNVMTRWGVLDDPDAAAEMLGGWMDAQPSGVEGRRQMPHFELTDEEKRGLSEFLRWADQMNTQSWPPNDAG.

The chain crosses the membrane as a helical; Signal-anchor span at residues 13-29; that stretch reads VFYGGSLFFIAVFVGLT. Residues C59, C62, and H63 each contribute to the heme c site.

Heterodimer of cytochromes b (large subunit) and c (small subunit).

It localises to the cell membrane. Component of the anaerobic respiratory chain that transforms nitrate to dinitrogen (denitrification). In Cereibacter sphaeroides (strain ATCC 17025 / ATH 2.4.3) (Rhodobacter sphaeroides), this protein is Nitric oxide reductase subunit C (norC).